We begin with the raw amino-acid sequence, 324 residues long: MGSQVRLVIAVCGIYATFLTWSLAQEPLTTSVWPNSAARFSHSSFIVLCQALTAAVVGLCYLKAQRSGYGAREFIRKHWADVAGISLTQALSAPAANHSLQYVDYVGYMLAKSCKLLPIMLVHVLVYRTPIGRDKALVGVLVSGGVALFTLGGAERKQGEASLYGLGMLLVSLFLDGLTNASQDRLLRRPASKKITGAHLMVALNTAIVLWNLAYLVLFDRTQWQGSLQQLHADPAILTYLFTYCACGALGQCFVFFTLEHYSSLVLATVTVTRKMVSMLLSIVVYGHSVRPVQWLGILVVFGGIIWETVKKGQRGSGQKSKQH.

2 consecutive transmembrane segments (helical) span residues 7–27 and 42–62; these read LVIA…AQEP and HSSF…LCYL. Asn97 carries N-linked (GlcNAc...) asparagine glycosylation. The next 7 helical transmembrane spans lie at 106-126, 135-155, 161-181, 199-219, 237-257, 265-285, and 290-310; these read VGYM…HVLV, KALV…GGAE, ASLY…LTNA, HLMV…LVLF, ILTY…FVFF, LVLA…SIVV, and VRPV…WETV.

Belongs to the nucleotide-sugar transporter family. SLC35B subfamily.

It is found in the endoplasmic reticulum membrane. Its function is as follows. May be involved in specific transport of UDP-Gal from the cytosol to the Golgi lumen. Involved in the maintenance of optimal conditions for the folding of secretory pathway proteins in the endoplasmic reticulum. The protein is UDP-galactose transporter homolog 1 (HUT1) of Eremothecium gossypii (strain ATCC 10895 / CBS 109.51 / FGSC 9923 / NRRL Y-1056) (Yeast).